Consider the following 210-residue polypeptide: Thymidylate kinase (210 aa).

11 to 18 (GGEGAGKT) is a binding site for ATP.

This sequence belongs to the thymidylate kinase family.

The catalysed reaction is dTMP + ATP = dTDP + ADP. In terms of biological role, phosphorylation of dTMP to form dTDP in both de novo and salvage pathways of dTTP synthesis. This is Thymidylate kinase (tmk) from Halalkalibacterium halodurans (strain ATCC BAA-125 / DSM 18197 / FERM 7344 / JCM 9153 / C-125) (Bacillus halodurans).